Reading from the N-terminus, the 282-residue chain is Small ribosomal subunit protein uS2 (282 aa).

Residues 260–282 (KRRRSKVYKEEEREVVTNEDESR) are disordered. Over residues 266 to 282 (VYKEEEREVVTNEDESR) the composition is skewed to basic and acidic residues.

Belongs to the universal ribosomal protein uS2 family.

In Wolbachia sp. subsp. Drosophila simulans (strain wRi), this protein is Small ribosomal subunit protein uS2.